Consider the following 251-residue polypeptide: Octanoyltransferase (251 aa).

The BPL/LPL catalytic domain occupies 29–251; it reads AATPNSLWIC…GQKLSSYLAP (223 aa). 68–75 is a substrate binding site; that stretch reads RGGQVTYH. The interval 137–174 is disordered; the sequence is ARLRPSPQPSPKGRGSSTPVLLPPLPGEGGGGGGPDPD. Residues 184–186 and 197–199 each bind substrate; these read ALG and GVA. Residue cysteine 215 is the Acyl-thioester intermediate of the active site.

Belongs to the LipB family.

It is found in the cytoplasm. It carries out the reaction octanoyl-[ACP] + L-lysyl-[protein] = N(6)-octanoyl-L-lysyl-[protein] + holo-[ACP] + H(+). The protein operates within protein modification; protein lipoylation via endogenous pathway; protein N(6)-(lipoyl)lysine from octanoyl-[acyl-carrier-protein]: step 1/2. Catalyzes the transfer of endogenously produced octanoic acid from octanoyl-acyl-carrier-protein onto the lipoyl domains of lipoate-dependent enzymes. Lipoyl-ACP can also act as a substrate although octanoyl-ACP is likely to be the physiological substrate. The chain is Octanoyltransferase from Polaromonas sp. (strain JS666 / ATCC BAA-500).